Reading from the N-terminus, the 989-residue chain is Bifunctional glutamine synthetase adenylyltransferase/adenylyl-removing enzyme (989 aa).

Positions 1–474 (MNSSAIDADI…HYGKLFEGDP (474 aa)) are adenylyl removase. An adenylyl transferase region spans residues 480–989 (LPIDYAGGPD…FNRLIGGDSA (510 aa)).

The protein belongs to the GlnE family. Requires Mg(2+) as cofactor.

It carries out the reaction [glutamine synthetase]-O(4)-(5'-adenylyl)-L-tyrosine + phosphate = [glutamine synthetase]-L-tyrosine + ADP. The catalysed reaction is [glutamine synthetase]-L-tyrosine + ATP = [glutamine synthetase]-O(4)-(5'-adenylyl)-L-tyrosine + diphosphate. In terms of biological role, involved in the regulation of glutamine synthetase GlnA, a key enzyme in the process to assimilate ammonia. When cellular nitrogen levels are high, the C-terminal adenylyl transferase (AT) inactivates GlnA by covalent transfer of an adenylyl group from ATP to specific tyrosine residue of GlnA, thus reducing its activity. Conversely, when nitrogen levels are low, the N-terminal adenylyl removase (AR) activates GlnA by removing the adenylyl group by phosphorolysis, increasing its activity. The regulatory region of GlnE binds the signal transduction protein PII (GlnB) which indicates the nitrogen status of the cell. The sequence is that of Bifunctional glutamine synthetase adenylyltransferase/adenylyl-removing enzyme from Rhodopseudomonas palustris (strain BisB5).